The sequence spans 300 residues: Ribosomal protein L11 methyltransferase (300 aa).

Residues T144, G165, D187, and N235 each contribute to the S-adenosyl-L-methionine site.

This sequence belongs to the methyltransferase superfamily. PrmA family.

The protein resides in the cytoplasm. The enzyme catalyses L-lysyl-[protein] + 3 S-adenosyl-L-methionine = N(6),N(6),N(6)-trimethyl-L-lysyl-[protein] + 3 S-adenosyl-L-homocysteine + 3 H(+). Methylates ribosomal protein L11. This chain is Ribosomal protein L11 methyltransferase, found in Prochlorococcus marinus (strain MIT 9515).